The primary structure comprises 110 residues: Large ribosomal subunit protein uL22 (110 aa).

The protein belongs to the universal ribosomal protein uL22 family. As to quaternary structure, part of the 50S ribosomal subunit.

Its function is as follows. This protein binds specifically to 23S rRNA; its binding is stimulated by other ribosomal proteins, e.g. L4, L17, and L20. It is important during the early stages of 50S assembly. It makes multiple contacts with different domains of the 23S rRNA in the assembled 50S subunit and ribosome. The globular domain of the protein is located near the polypeptide exit tunnel on the outside of the subunit, while an extended beta-hairpin is found that lines the wall of the exit tunnel in the center of the 70S ribosome. The protein is Large ribosomal subunit protein uL22 of Haemophilus ducreyi (strain 35000HP / ATCC 700724).